Here is a 493-residue protein sequence, read N- to C-terminus: Probable protein phosphatase 2C 40 (493 aa).

The 336-residue stretch at 145 to 480 folds into the PPM-type phosphatase domain; sequence LLSAMEVQVA…DDVTIMVITL (336 aa). 4 residues coordinate Mn(2+): D180, G181, D408, and D471.

This sequence belongs to the PP2C family. Mg(2+) is required as a cofactor. Requires Mn(2+) as cofactor.

It carries out the reaction O-phospho-L-seryl-[protein] + H2O = L-seryl-[protein] + phosphate. The enzyme catalyses O-phospho-L-threonyl-[protein] + H2O = L-threonyl-[protein] + phosphate. This is Probable protein phosphatase 2C 40 from Arabidopsis thaliana (Mouse-ear cress).